The following is a 555-amino-acid chain: CTP synthase (555 aa).

Residues 1 to 265 (MTRYIFITGG…GNRVCEKLNI (265 aa)) form an amidoligase domain region. A CTP-binding site is contributed by S13. A UTP-binding site is contributed by S13. ATP contacts are provided by residues 14 to 19 (SLGKGI) and D71. Mg(2+) contacts are provided by D71 and E139. CTP contacts are provided by residues 146–148 (DIE), 186–191 (KTKPTQ), and K222. Residues 186 to 191 (KTKPTQ) and K222 contribute to the UTP site. The 252-residue stretch at 290–541 (TVAVVGKYVD…IKAGLAAKEA (252 aa)) folds into the Glutamine amidotransferase type-1 domain. G351 lines the L-glutamine pocket. C378 acts as the Nucleophile; for glutamine hydrolysis in catalysis. L-glutamine is bound by residues 379 to 382 (LGMQ), E402, and R469. Active-site residues include H514 and E516.

Belongs to the CTP synthase family. As to quaternary structure, homotetramer.

It catalyses the reaction UTP + L-glutamine + ATP + H2O = CTP + L-glutamate + ADP + phosphate + 2 H(+). The catalysed reaction is L-glutamine + H2O = L-glutamate + NH4(+). The enzyme catalyses UTP + NH4(+) + ATP = CTP + ADP + phosphate + 2 H(+). It functions in the pathway pyrimidine metabolism; CTP biosynthesis via de novo pathway; CTP from UDP: step 2/2. Allosterically activated by GTP, when glutamine is the substrate; GTP has no effect on the reaction when ammonia is the substrate. The allosteric effector GTP functions by stabilizing the protein conformation that binds the tetrahedral intermediate(s) formed during glutamine hydrolysis. Inhibited by the product CTP, via allosteric rather than competitive inhibition. Catalyzes the ATP-dependent amination of UTP to CTP with either L-glutamine or ammonia as the source of nitrogen. Regulates intracellular CTP levels through interactions with the four ribonucleotide triphosphates. The protein is CTP synthase of Coxiella burnetii (strain RSA 493 / Nine Mile phase I).